The following is a 294-amino-acid chain: MALLTPQGVKEVFQLQRPQGRERLRRLLNWEEFDEQRDSRRSILLDTLYESIIFAVGKGFPWVEVAQVVKFTEELLRETKGCSITEAVTILGNKLRDYRGHFNTTHLLALCDYFHHTFIRHYKLYQYVLGQDQQVDLTVAHLEVCMPPHPLPLAEGMDRDLWIHEQQVATLTEAEAQKRADVLLLKEALRLERENSLQKAFAAAAPAQPGQVLERQELESLICQAVHTQMELLQELLQRQIQNTFAILDLKLQKKTLNLNAPTPIPPPITSHAGQEEALKPQRASKGKKAKARK.

The disordered stretch occupies residues 259 to 294 (LNAPTPIPPPITSHAGQEEALKPQRASKGKKAKARK). Over residues 283-294 (RASKGKKAKARK) the composition is skewed to basic residues.

This is an uncharacterized protein from Homo sapiens (Human).